The sequence spans 122 residues: Large ribosomal subunit protein uL14 (122 aa).

Belongs to the universal ribosomal protein uL14 family. As to quaternary structure, part of the 50S ribosomal subunit. Forms a cluster with proteins L3 and L19. In the 70S ribosome, L14 and L19 interact and together make contacts with the 16S rRNA in bridges B5 and B8.

In terms of biological role, binds to 23S rRNA. Forms part of two intersubunit bridges in the 70S ribosome. This Thermus aquaticus protein is Large ribosomal subunit protein uL14.